The following is a 161-amino-acid chain: NAD(P)H-quinone oxidoreductase subunit I, chloroplastic (161 aa).

4Fe-4S ferredoxin-type domains follow at residues 55 to 84 and 95 to 124; these read GRIH…VDWK and LNYS…MTEE. Residues C64, C67, C70, C74, C104, C107, C110, and C114 each coordinate [4Fe-4S] cluster.

This sequence belongs to the complex I 23 kDa subunit family. NDH is composed of at least 16 different subunits, 5 of which are encoded in the nucleus. [4Fe-4S] cluster is required as a cofactor.

The protein resides in the plastid. The protein localises to the chloroplast thylakoid membrane. The enzyme catalyses a plastoquinone + NADH + (n+1) H(+)(in) = a plastoquinol + NAD(+) + n H(+)(out). The catalysed reaction is a plastoquinone + NADPH + (n+1) H(+)(in) = a plastoquinol + NADP(+) + n H(+)(out). In terms of biological role, NDH shuttles electrons from NAD(P)H:plastoquinone, via FMN and iron-sulfur (Fe-S) centers, to quinones in the photosynthetic chain and possibly in a chloroplast respiratory chain. The immediate electron acceptor for the enzyme in this species is believed to be plastoquinone. Couples the redox reaction to proton translocation, and thus conserves the redox energy in a proton gradient. This Phaseolus vulgaris (Kidney bean) protein is NAD(P)H-quinone oxidoreductase subunit I, chloroplastic.